The following is an 86-amino-acid chain: Large ribosomal subunit protein bL27 (86 aa).

A disordered region spans residues 1-22; it reads MAHKKAGGSTRNGRDSESKRLG.

The protein belongs to the bacterial ribosomal protein bL27 family.

This is Large ribosomal subunit protein bL27 from Vibrio cholerae serotype O1 (strain ATCC 39315 / El Tor Inaba N16961).